The sequence spans 607 residues: Cytosolic Fe-S cluster assembly factor nar1 (607 aa).

C20 contacts [4Fe-4S] cluster. The tract at residues P28 to V47 is disordered. Polar residues predominate over residues K29–E40. [4Fe-4S] cluster contacts are provided by C62, C65, C68, C214, and C269. The disordered stretch occupies residues A439 to A461. Residues Q452 to A461 are compositionally biased toward polar residues. Residues C475 and C479 each contribute to the [4Fe-4S] cluster site. Over residues A494–E505 the composition is skewed to polar residues. The interval A494–H513 is disordered.

This sequence belongs to the NARF family.

Component of the cytosolic Fe/S protein assembly machinery. Required for maturation of extramitochondrial Fe/S proteins. May play a role in the transfer of pre-assembled Fe/S clusters to target apoproteins. The protein is Cytosolic Fe-S cluster assembly factor nar1 (nar1) of Aspergillus oryzae (strain ATCC 42149 / RIB 40) (Yellow koji mold).